The chain runs to 137 residues: MEQTLSIIKPDAVAKNVVGKIIDRFESNGLKVAAAKRLQLSRADAEQFYAVHKERPFFKDLVDFMVSGPVVAMVLEGENAVLKNRDLMGATDPKKAAPGTIRADFADSIDANAVHGSDSLENAKIEIAFFFSGREIN.

ATP contacts are provided by lysine 9, phenylalanine 57, arginine 85, threonine 91, arginine 102, and asparagine 112. Residue histidine 115 is the Pros-phosphohistidine intermediate of the active site.

The protein belongs to the NDK family. As to quaternary structure, homotetramer. Mg(2+) serves as cofactor.

It is found in the cytoplasm. The enzyme catalyses a 2'-deoxyribonucleoside 5'-diphosphate + ATP = a 2'-deoxyribonucleoside 5'-triphosphate + ADP. It catalyses the reaction a ribonucleoside 5'-diphosphate + ATP = a ribonucleoside 5'-triphosphate + ADP. Its function is as follows. Major role in the synthesis of nucleoside triphosphates other than ATP. The ATP gamma phosphate is transferred to the NDP beta phosphate via a ping-pong mechanism, using a phosphorylated active-site intermediate. This chain is Nucleoside diphosphate kinase, found in Wolinella succinogenes (strain ATCC 29543 / DSM 1740 / CCUG 13145 / JCM 31913 / LMG 7466 / NCTC 11488 / FDC 602W) (Vibrio succinogenes).